Here is a 35-residue protein sequence, read N- to C-terminus: Kappa-theraphotoxin-Gr1b (35 aa).

3 disulfide bridges follow: Cys2–Cys16, Cys9–Cys21, and Cys15–Cys28. The interval Tyr4 to Phe6 is involved in active face.

Belongs to the neurotoxin 10 (Hwtx-1) family. 09 (HaTx) subfamily. In terms of tissue distribution, expressed by the venom gland.

It localises to the secreted. Functionally, inhibitor of voltage-gated potassium channels. Inhibits Kv2.1/KCNB1 channels, by shifting activation of the channel to more depolarized voltages. The toxin binding sites may be situated on the S3-S4 extracellular linker of the channel. One, two, three or four toxin molecules may bind the Kv2.1/KCNB1 channel. May need to partition into the membrane in order to bind to the channel. Antibacterial activity is not observed. This chain is Kappa-theraphotoxin-Gr1b, found in Grammostola rosea (Chilean rose tarantula).